A 106-amino-acid chain; its full sequence is EspC protein homolog (106 aa).

It belongs to the EspC family.

The sequence is that of EspC protein homolog from Mycobacterium leprae (strain TN).